We begin with the raw amino-acid sequence, 21 residues long: Large ribosomal subunit protein uL30 (21 aa).

The span at 1-15 (AKTENKTVTVRQTAS) shows a compositional bias: polar residues. Residues 1–21 (AKTENKTVTVRQTASPIXXXK) are disordered.

This sequence belongs to the universal ribosomal protein uL30 family. In terms of assembly, part of the 50S ribosomal subunit.

This Brevundimonas diminuta (Pseudomonas diminuta) protein is Large ribosomal subunit protein uL30 (rpmD).